We begin with the raw amino-acid sequence, 217 residues long: MSLTMRIFTASRNGQRLFGSHGARLLAAQRAEPKDIVEVPKGYVYVNNKELSMEFADITDRAASTMFFGELLRGFAVTLAHIFKEPATINYPFEKGPLSPRFRGEHALRRYPSGEERCIACKLCEAICPAQAITIEAEERADGSRRTTRYDIDMTKCIYCGFCQEACPVDAIVEGPNFEFSTETHEELLYNKEKLLCNGDKWESEIASNLQADHLYR.

The N-terminal 26 residues, 1 to 26 (MSLTMRIFTASRNGQRLFGSHGARLL), are a transit peptide targeting the mitochondrion. 2 consecutive 4Fe-4S ferredoxin-type domains span residues 109–138 (RRYPSGEERCIACKLCEAICPAQAITIEAE) and 148–177 (TRYDIDMTKCIYCGFCQEACPVDAIVEGPN). C118, C121, C124, C128, C157, C160, C163, and C167 together coordinate [4Fe-4S] cluster.

This sequence belongs to the complex I 23 kDa subunit family. Part of the mitochondrial membrane respiratory chain NADH dehydrogenase (Complex I). This is a component of the iron-sulfur (IP) fragment of the enzyme. Requires [4Fe-4S] cluster as cofactor. In terms of tissue distribution, expressed in muscles (at protein level).

The protein resides in the mitochondrion. The catalysed reaction is a ubiquinone + NADH + 5 H(+)(in) = a ubiquinol + NAD(+) + 4 H(+)(out). Core subunit of the mitochondrial membrane respiratory chain NADH dehydrogenase (Complex I) that is believed to belong to the minimal assembly required for catalysis. Complex I functions in the transfer of electrons from NADH to the respiratory chain. The immediate electron acceptor for the enzyme is believed to be ubiquinone. The polypeptide is NADH dehydrogenase (ubiquinone) 23 kDa subunit (Drosophila melanogaster (Fruit fly)).